An 85-amino-acid polypeptide reads, in one-letter code: Large ribosomal subunit protein bL27 (85 aa).

Residues 1–21 are disordered; that stretch reads MAHKKGGGTTRNGRDSESKRL.

It belongs to the bacterial ribosomal protein bL27 family.

The chain is Large ribosomal subunit protein bL27 from Janthinobacterium sp. (strain Marseille) (Minibacterium massiliensis).